A 567-amino-acid polypeptide reads, in one-letter code: MNILNLKIIMFLLISNIIVVGGAWATSTCPDWPATRIAVEINALEQQLNKWSAAYHQQGHSPVTDDIYDQLQDKLRVWQSCRGLPDKTESQPIPGKGQFLHPVAHTGLKKLKDETALTRWMAGRKNLWVQPKVDGVAVTLVYHGGKLVQLLSRGNGVKGQNWTEKAPFISAIPQYIANAPALLTLQGELFLLMDGHQQAKSGGVNARSTVAGALMRKSPSPLLAQVGVFIWAWPDGPTTMKEKVALLQVMGFPFTAKYSEPVMSHLDVVQWRQFWFQAPLPFVTDGVVVRQEEEPAGRYWQATPGQWSMAWKYPPLQHIAEVKDIHFTLGRTGKGTVVLEVLPIKIDDKWIRRVNIGSVTRWKQWDIAPGDHITLALAGHGIPRLDNVVWRVHQRNTITAPNWDKFHQLSCFQRLPHGCEPQFLSRLIWLSGPGGLDIGGIGGGFWQELIHHELINDLVGWLLLTPEQIASIPGIGNARAEKIYQQFQRAKQQPFSRWLLALGFPQVVSVDAQWQVVLRRSLSEWATMAGIGQMRAKQIKHFLDHPDVQALADFLSTQKVVGFELTE.

Lys-132 acts as the N6-AMP-lysine intermediate in catalysis.

The protein belongs to the NAD-dependent DNA ligase family. LigB subfamily.

It catalyses the reaction NAD(+) + (deoxyribonucleotide)n-3'-hydroxyl + 5'-phospho-(deoxyribonucleotide)m = (deoxyribonucleotide)n+m + AMP + beta-nicotinamide D-nucleotide.. In terms of biological role, catalyzes the formation of phosphodiester linkages between 5'-phosphoryl and 3'-hydroxyl groups in double-stranded DNA using NAD as a coenzyme and as the energy source for the reaction. The polypeptide is DNA ligase B (Yersinia pseudotuberculosis serotype O:1b (strain IP 31758)).